We begin with the raw amino-acid sequence, 259 residues long: MLMVISPAKTLDFETPPTTGRFTQPQYLDHSQELITQLRELTPAQISELMHLSDKLAGLNAARFGSWNPAFTLDNAKQALLAFKGDVYTGLQAETLSDAQLDYAQDHLRMLSGLYGLLRPLDLMQPYRLEMGTRLANARGKDLYAFWGTQISEWLNEALAAQGDDLLLNLASTEYFSAVKRSALKARIIDTEFKDFKNGQYKIISFYAKKARGMMSRFVIEERINSPEALQAFDVKGYRYNREQSTPDKLVFLRNVVED.

It belongs to the UPF0246 family.

This chain is UPF0246 protein PSPPH_1119, found in Pseudomonas savastanoi pv. phaseolicola (strain 1448A / Race 6) (Pseudomonas syringae pv. phaseolicola (strain 1448A / Race 6)).